We begin with the raw amino-acid sequence, 432 residues long: Homogentisate 1,2-dioxygenase (432 aa).

Residue His-287 is the Proton acceptor of the active site. Residues His-330 and Glu-336 each coordinate Fe cation. Homogentisate-binding residues include Tyr-345 and His-366. Position 366 (His-366) interacts with Fe cation.

The protein belongs to the homogentisate dioxygenase family. Hexamer; dimer of trimers. Fe cation serves as cofactor.

It catalyses the reaction homogentisate + O2 = 4-maleylacetoacetate + H(+). Its pathway is amino-acid degradation; L-phenylalanine degradation; acetoacetate and fumarate from L-phenylalanine: step 4/6. Functionally, involved in the catabolism of homogentisate (2,5-dihydroxyphenylacetate or 2,5-OH-PhAc), a central intermediate in the degradation of phenylalanine and tyrosine. Catalyzes the oxidative ring cleavage of the aromatic ring of homogentisate to yield maleylacetoacetate. The protein is Homogentisate 1,2-dioxygenase of Pseudomonas aeruginosa (strain UCBPP-PA14).